We begin with the raw amino-acid sequence, 273 residues long: Glutamate transport system permease protein GluD (273 aa).

5 helical membrane-spanning segments follow: residues 26–46 (ILPG…LALV), 64–84 (WFCA…LMIF), 100–120 (LAFA…IAEI), 150–170 (ILLP…MVIA), and 200–220 (LAAL…LTAL). One can recognise an ABC transmembrane type-1 domain in the interval 30 to 221 (LWGTLKSAVF…VLNFSLTALA (192 aa)). Positions 242 to 273 (PEQPDQGLETKDNVNVDWQDPDYKDLKTPGVQ) are disordered. The span at 262–273 (PDYKDLKTPGVQ) shows a compositional bias: basic and acidic residues.

This sequence belongs to the binding-protein-dependent transport system permease family. HisMQ subfamily. The complex is composed of two ATP-binding proteins (GluA), two transmembrane proteins (GluC and GluD) and a solute-binding protein (GluB).

The protein resides in the cell membrane. Functionally, part of the ABC transporter complex GluABCD involved in glutamate uptake. Probably responsible for the translocation of the substrate across the membrane. This Corynebacterium glutamicum (strain ATCC 13032 / DSM 20300 / JCM 1318 / BCRC 11384 / CCUG 27702 / LMG 3730 / NBRC 12168 / NCIMB 10025 / NRRL B-2784 / 534) protein is Glutamate transport system permease protein GluD.